Reading from the N-terminus, the 284-residue chain is 2-dehydro-3-deoxyphosphooctonate aldolase (284 aa).

It belongs to the KdsA family.

It is found in the cytoplasm. The catalysed reaction is D-arabinose 5-phosphate + phosphoenolpyruvate + H2O = 3-deoxy-alpha-D-manno-2-octulosonate-8-phosphate + phosphate. It participates in carbohydrate biosynthesis; 3-deoxy-D-manno-octulosonate biosynthesis; 3-deoxy-D-manno-octulosonate from D-ribulose 5-phosphate: step 2/3. Its pathway is bacterial outer membrane biogenesis; lipopolysaccharide biosynthesis. This chain is 2-dehydro-3-deoxyphosphooctonate aldolase, found in Glaesserella parasuis serovar 5 (strain SH0165) (Haemophilus parasuis).